A 1024-amino-acid polypeptide reads, in one-letter code: Probable alpha-mannosidase At5g13980 (1024 aa).

An N-terminal signal peptide occupies residues 1–21; that stretch reads MDLAKFLCWIVLLLGISLVES. A glycan (N-linked (GlcNAc...) asparagine) is linked at Asn27. The Zn(2+) site is built by His46 and Asp48. N-linked (GlcNAc...) asparagine glycosylation occurs at Asn63. Asp168 contributes to the Zn(2+) binding site. N-linked (GlcNAc...) asparagine glycosylation is present at Asn278. A Zn(2+)-binding site is contributed by His410. Cysteines 461 and 469 form a disulfide. N-linked (GlcNAc...) asparagine glycans are attached at residues Asn465, Asn475, Asn637, Asn658, Asn733, and Asn823. Cys827 and Cys832 are oxidised to a cystine.

It belongs to the glycosyl hydrolase 38 family. As to quaternary structure, homodimer. It depends on Zn(2+) as a cofactor.

It carries out the reaction Hydrolysis of terminal, non-reducing alpha-D-mannose residues in alpha-D-mannosides.. Its function is as follows. Liberates mannose from p-nitrophenyl-alpha-D-mannoside in vitro. This Arabidopsis thaliana (Mouse-ear cress) protein is Probable alpha-mannosidase At5g13980.